The primary structure comprises 726 residues: Transmembrane channel-like protein 8 (726 aa).

Residues 1-114 are Cytoplasmic-facing; the sequence is MLLPRSVSSE…GIRSYFTFLR (114 aa). At Ser6 the chain carries Phosphoserine. The chain crosses the membrane as a helical span at residues 115–135; that stretch reads FLLLLNLLSLLLTASFVLLPL. At 136 to 200 the chain is on the lumenal side; the sequence is VWLRPPDPGP…VGPESSSVYS (65 aa). Asn148 carries N-linked (GlcNAc...) asparagine glycosylation. The helical transmembrane segment at 201–221 threads the bilayer; the sequence is IRLAYLLSPLACLLLCFCGTL. Residues 222–299 are Cytoplasmic-facing; that stretch reads RRMVKGLPQK…AQTACRLLSY (78 aa). A helical transmembrane segment spans residues 300–320; the sequence is LRVNVLNGLLVVGAISAIFWA. Residues 321–338 lie on the Lumenal side of the membrane; sequence TKYSQDNKEESLFLLLQY. A helical membrane pass occupies residues 339–359; sequence LPPGVIALVNFLGPLLFTFLV. Residues 360-426 are Cytoplasmic-facing; the sequence is QLENYPPNTE…QCWENSVGEE (67 aa). The segment at 362 to 530 is TMC domain; that stretch reads ENYPPNTEVN…SSRPFRASSS (169 aa). Residues 427–447 traverse the membrane as a helical segment; it reads LYKLSIFNFLLTVAFAFLVTL. Over 448–488 the chain is Lumenal; the sequence is PRRLLVDRFSGRFWAWLEREEFLVPKNVLDIVAGQTVTWMG. The chain crosses the membrane as a helical span at residues 489–509; the sequence is LFYCPLLPLLNSVFLFLTFYI. At 510 to 531 the chain is on the cytoplasmic side; it reads KKYTLLKNSRASSRPFRASSST. The helical transmembrane segment at 532–552 threads the bilayer; that stretch reads FFFQLVLLLGLLLAAVPLGYV. The Lumenal segment spans residues 553 to 594; that stretch reads VSSIHSSWDCGLFTNYSAPWQVVPELVALGLPPIGQRALHYL. Asn567 carries an N-linked (GlcNAc...) asparagine glycan. A helical transmembrane segment spans residues 595-615; it reads GSHAFSFPLLIMLSLVLTVCV. Residues 616–726 lie on the Cytoplasmic side of the membrane; sequence SQTQANARAI…RFRFPSGAEL (111 aa). The tract at residues 651–726 is disordered; the sequence is PEPGPSDSPG…RFRFPSGAEL (76 aa). Positions 652-662 are enriched in pro residues; the sequence is EPGPSDSPGPK. Ser658 and Ser673 each carry phosphoserine.

It belongs to the TMC family. Interacts with TMC6. Interacts and forms a complex with TMC6 and CIB1; the interaction stabilizes each component of the complex. Interacts and forms a complex with TMC6 and SLC30A1/ZNT1; the interaction regulates zinc transport into the ER. Interacts with TRADD; the interaction competes with TRADD/RIPK1/TRAF2/cIAPs complex I formation and facilites complex II formation. In terms of assembly, (Microbial infection) Interacts with human papillomavirus 16/HPV16 protein E5; the interaction alleviates TMC8-mediated transcription factors inhibition. Expressed in placenta, prostate and testis.

The protein localises to the endoplasmic reticulum membrane. Its subcellular location is the golgi apparatus membrane. The protein resides in the nucleus membrane. Its function is as follows. Acts as a regulatory protein involved in the regulation of numerous cellular processes. Together with its homolog TMC6/EVER1, forms a complex with calcium-binding protein CIB1 in lymphocytes and keratynocytes where TMC6 and TMC8 stabilize CIB1 levels and reciprocally. Together with TMC6, also forms a complex with and activates zinc transporter ZNT1 at the ER membrane of keratynocytes, thereby facilitating zinc uptake into the ER. Also inhibits receptor-mediated calcium release from ER stores and calcium activated and volume regulated chloride channels. Down-regulates the activity of transcription factors induced by zinc and cytokines. Also sequesters TRADD which impairs the recruitment of TRAF2 and RIPK1 in the pro-survival complex I and promotes proapoptotic complex II formation, and may therefore be involved in TNF-induced cell death/survival decisions. This chain is Transmembrane channel-like protein 8, found in Homo sapiens (Human).